The primary structure comprises 188 residues: Phosphatidylcholine-sterol acyltransferase (188 aa).

Residue Asn-20 is glycosylated (N-linked (GlcNAc...) asparagine). His-169 functions as the Charge relay system in the catalytic mechanism.

It belongs to the AB hydrolase superfamily. Lipase family. As to expression, detected in blood plasma (at protein level).

It is found in the secreted. The catalysed reaction is a sterol + a 1,2-diacyl-sn-glycero-3-phosphocholine = a sterol ester + a 1-acyl-sn-glycero-3-phosphocholine. The enzyme catalyses a 1-O-alkyl-2-acetyl-sn-glycero-3-phosphocholine + H2O = a 1-O-alkyl-sn-glycero-3-phosphocholine + acetate + H(+). It carries out the reaction a 1-hexadecanoyl-2-acyl-sn-glycero-3-phosphocholine + (24S)-hydroxycholesterol = (24S)-24-hydroxycholesterol ester + 1-hexadecanoyl-sn-glycero-3-phosphocholine. It catalyses the reaction (24S)-hydroxycholesterol + 1-hexadecanoyl-2-(9Z,12Z-octadecadienoyl)-sn-glycero-3-phosphocholine = (24S)-hydroxycholesterol 3-linoleoate + 1-hexadecanoyl-sn-glycero-3-phosphocholine. The catalysed reaction is 1-hexadecanoyl-2-(5Z,8Z,11Z,14Z-eicosatetraenoyl)-sn-glycero-3-phosphocholine + cholesterol = cholesteryl (5Z,8Z,11Z,14Z)-eicosatetraenoate + 1-hexadecanoyl-sn-glycero-3-phosphocholine. The enzyme catalyses 1-hexadecanoyl-2-(9Z-octadecenoyl)-sn-glycero-3-phosphocholine + cholesterol = cholesteryl (9Z-octadecenoate) + 1-hexadecanoyl-sn-glycero-3-phosphocholine. It carries out the reaction 1-hexadecanoyl-2-(8Z,11Z,14Z-eicosatrienoyl)-sn-glycero-3-phosphocholine + cholesterol = cholesteryl (8Z,11Z,14Z)-eicosatrienoate + 1-hexadecanoyl-sn-glycero-3-phosphocholine. It catalyses the reaction 1-hexadecanoyl-2-(5Z,8Z,11Z-eicosatrienoyl)-sn-glycero-3-phosphocholine + cholesterol = cholesteryl (5Z,8Z,11Z)-eicosatrienoate + 1-hexadecanoyl-sn-glycero-3-phosphocholine. The catalysed reaction is 1-hexadecanoyl-2-(5Z,8Z,11Z,14Z,17Z-eicosapentaenoyl)-sn-glycero-3-phosphocholine + cholesterol = (5Z,8Z,11Z,14Z,17Z-eicosapentaenoyl)-cholesterol + 1-hexadecanoyl-sn-glycero-3-phosphocholine. The enzyme catalyses 1-hexadecanoyl-2-(9Z,12Z-octadecadienoyl)-sn-glycero-3-phosphocholine + cholesterol = cholesteryl (9Z,12Z)-octadecadienoate + 1-hexadecanoyl-sn-glycero-3-phosphocholine. It carries out the reaction 1-hexadecanoyl-2-(6Z,9Z,12Z-octadecatrienoyl)-sn-glycero-3-phosphocholine + cholesterol = (6Z,9Z,12Z-octadecatrienoyl)-cholesterol + 1-hexadecanoyl-sn-glycero-3-phosphocholine. It catalyses the reaction 1-hexadecanoyl-2-(11Z,14Z,17Z-eicosatrienoyl)-sn-glycero-3-phosphocholine + cholesterol = (11Z,14Z,17Z-eicosatrienoyl)-cholesterol + 1-hexadecanoyl-sn-glycero-3-phosphocholine. The catalysed reaction is 1-hexadecanoyl-2-(9Z,12Z,15Z-octadecatrienoyl)-sn-glycero-3-phosphocholine + cholesterol = (9Z,12Z,15Z-octadecatrienoyl)-cholesterol + 1-hexadecanoyl-sn-glycero-3-phosphocholine. The enzyme catalyses 1-hexadecanoyl-2-(9Z,12Z-octadecadienoyl)-sn-glycero-3-phosphocholine + H2O = (9Z,12Z)-octadecadienoate + 1-hexadecanoyl-sn-glycero-3-phosphocholine + H(+). It carries out the reaction 1-hexadecanoyl-2-(5Z,8Z,11Z,14Z-eicosatetraenoyl)-sn-glycero-3-phosphocholine + H2O = 1-hexadecanoyl-sn-glycero-3-phosphocholine + (5Z,8Z,11Z,14Z)-eicosatetraenoate + H(+). It catalyses the reaction a 1-O-alkyl-2-acetyl-sn-glycero-3-phosphocholine + 1-hexadecanoyl-sn-glycero-3-phosphocholine = 1-hexadecanoyl-2-acetyl-sn-glycero-3-phosphocholine + a 1-O-alkyl-sn-glycero-3-phosphocholine. Central enzyme in the extracellular metabolism of plasma lipoproteins. Synthesized mainly in the liver and secreted into plasma where it converts cholesterol and phosphatidylcholines (lecithins) to cholesteryl esters and lysophosphatidylcholines on the surface of high and low density lipoproteins (HDLs and LDLs). The cholesterol ester is then transported back to the liver. Also produced in the brain by primary astrocytes, and esterifies free cholesterol on nascent APOE-containing lipoproteins secreted from glia and influences cerebral spinal fluid (CSF) APOE- and APOA1 levels. Together with APOE and the cholesterol transporter ABCA1, plays a key role in the maturation of glial-derived, nascent lipoproteins. Required for remodeling high-density lipoprotein particles into their spherical forms. Has a preference for plasma 16:0-18:2 or 18:O-18:2 phosphatidylcholines. Catalyzes the hydrolysis of 1-O-alkyl-2-acetyl-sn-glycero-3-phosphocholine (platelet-activating factor or PAF) to 1-O-alkyl-sn-glycero-3-phosphocholine (lyso-PAF). Also catalyzes the transfer of the acetate group from PAF to 1-hexadecanoyl-sn-glycero-3-phosphocholine forming lyso-PAF. Catalyzes the esterification of (24S)-hydroxycholesterol (24(S)OH-C), also known as cerebrosterol to produce 24(S)OH-C monoesters. The polypeptide is Phosphatidylcholine-sterol acyltransferase (LCAT) (Sus scrofa (Pig)).